A 421-amino-acid chain; its full sequence is 3-hydroxy-3-methylglutaryl-coenzyme A reductase (421 aa).

Catalysis depends on charge relay system residues Glu-109, Lys-240, and Asp-315. The Proton donor role is filled by His-410.

This sequence belongs to the HMG-CoA reductase family.

It catalyses the reaction (R)-mevalonate + 2 NADP(+) + CoA = (3S)-3-hydroxy-3-methylglutaryl-CoA + 2 NADPH + 2 H(+). The protein operates within metabolic intermediate biosynthesis; (R)-mevalonate biosynthesis; (R)-mevalonate from acetyl-CoA: step 3/3. In terms of biological role, converts HMG-CoA to mevalonate. The polypeptide is 3-hydroxy-3-methylglutaryl-coenzyme A reductase (hmgA) (Aeropyrum pernix (strain ATCC 700893 / DSM 11879 / JCM 9820 / NBRC 100138 / K1)).